Consider the following 113-residue polypeptide: UPF0482 protein YnfB (113 aa).

An N-terminal signal peptide occupies residues 1 to 28; that stretch reads MKITLSKRIGLLAFLLPCALALSTTVHA.

Belongs to the UPF0482 family.

In Shigella dysenteriae serotype 1 (strain Sd197), this protein is UPF0482 protein YnfB.